Here is a 393-residue protein sequence, read N- to C-terminus: uncharacterized protein (393 aa).

In terms of domain architecture, Flavodoxin-like spans 250-389; it reads AVIVYDTMYN…KCYEFGKRLA (140 aa).

This is an uncharacterized protein from Methanocaldococcus jannaschii (strain ATCC 43067 / DSM 2661 / JAL-1 / JCM 10045 / NBRC 100440) (Methanococcus jannaschii).